Here is a 330-residue protein sequence, read N- to C-terminus: Quinone oxidoreductase (330 aa).

Residue Ala2 is modified to N-acetylalanine. Lys23 carries the N6-acetyllysine modification. Residues Tyr53, 158 to 161, Gly181, His200, Asn229, 246 to 249, and 269 to 271 each bind NADP(+); these read SGGV, VGSK, and VTL. Ser248 bears the Phosphoserine mark.

The protein belongs to the zinc-containing alcohol dehydrogenase family. Quinone oxidoreductase subfamily. Homotetramer.

The protein localises to the cytoplasm. It carries out the reaction 2 a quinone + NADPH + H(+) = 2 a 1,4-benzosemiquinone + NADP(+). Does not have alcohol dehydrogenase activity. Binds NADP and acts through a one-electron transfer process. Orthoquinones, such as 1,2-naphthoquinone or 9,10-phenanthrenequinone, are the best substrates (in vitro). May act in the detoxification of xenobiotics. Interacts with (AU)-rich elements (ARE) in the 3'-UTR of target mRNA species and enhances their stability. NADPH binding interferes with mRNA binding. The polypeptide is Quinone oxidoreductase (CRYZ) (Lama guanicoe (Guanaco)).